Reading from the N-terminus, the 532-residue chain is Putative 57 kDa heat shock protein (532 aa).

SHSP domains follow at residues 25–134 and 439–532; these read VNGP…CKIT and SVLE…IPSN.

The protein belongs to the small heat shock protein (HSP20) family.

This chain is Putative 57 kDa heat shock protein, found in Arabidopsis thaliana (Mouse-ear cress).